The sequence spans 222 residues: UPF0758 protein Cag_1513 (222 aa).

Positions 100–222 constitute an MPN domain; that stretch reads KIMAAGDVFE…WYSFRERGLL (123 aa). Residues His-171, His-173, and Asp-184 each coordinate Zn(2+). The JAMM motif motif lies at 171-184; that stretch reads HNHPSGDVNPSNAD.

The protein belongs to the UPF0758 family.

This Chlorobium chlorochromatii (strain CaD3) protein is UPF0758 protein Cag_1513.